Reading from the N-terminus, the 37-residue chain is Large ribosomal subunit protein bL36 (37 aa).

This sequence belongs to the bacterial ribosomal protein bL36 family.

This Helicobacter pylori (strain ATCC 700392 / 26695) (Campylobacter pylori) protein is Large ribosomal subunit protein bL36.